Reading from the N-terminus, the 305-residue chain is Ribosomal protein L11 methyltransferase (305 aa).

Thr-155, Gly-176, Asp-198, and Asn-241 together coordinate S-adenosyl-L-methionine.

This sequence belongs to the methyltransferase superfamily. PrmA family.

The protein resides in the cytoplasm. It catalyses the reaction L-lysyl-[protein] + 3 S-adenosyl-L-methionine = N(6),N(6),N(6)-trimethyl-L-lysyl-[protein] + 3 S-adenosyl-L-homocysteine + 3 H(+). In terms of biological role, methylates ribosomal protein L11. This Carboxydothermus hydrogenoformans (strain ATCC BAA-161 / DSM 6008 / Z-2901) protein is Ribosomal protein L11 methyltransferase.